We begin with the raw amino-acid sequence, 420 residues long: ATP-dependent Clp protease ATP-binding subunit ClpX (420 aa).

Residues 3-57 (KKTPGTNGKQKLFCSFCGKEQDAVKRLVAGPGVYICDECISLCNEIIAEDHEHSH) form the ClpX-type ZB domain. Zn(2+) contacts are provided by Cys16, Cys19, Cys38, and Cys41. 122-129 (PTGSGKTL) contributes to the ATP binding site.

This sequence belongs to the ClpX chaperone family. In terms of assembly, component of the ClpX-ClpP complex. Forms a hexameric ring that, in the presence of ATP, binds to fourteen ClpP subunits assembled into a disk-like structure with a central cavity, resembling the structure of eukaryotic proteasomes.

ATP-dependent specificity component of the Clp protease. It directs the protease to specific substrates. Can perform chaperone functions in the absence of ClpP. This chain is ATP-dependent Clp protease ATP-binding subunit ClpX, found in Leptospira borgpetersenii serovar Hardjo-bovis (strain L550).